A 288-amino-acid chain; its full sequence is 4-hydroxy-3-methylbut-2-enyl diphosphate reductase (288 aa).

Cysteine 12 contributes to the [4Fe-4S] cluster binding site. Positions 42 and 77 each coordinate (2E)-4-hydroxy-3-methylbut-2-enyl diphosphate. Residues histidine 42 and histidine 77 each coordinate dimethylallyl diphosphate. 2 residues coordinate isopentenyl diphosphate: histidine 42 and histidine 77. Cysteine 99 contributes to the [4Fe-4S] cluster binding site. Histidine 127 contacts (2E)-4-hydroxy-3-methylbut-2-enyl diphosphate. Dimethylallyl diphosphate is bound at residue histidine 127. Histidine 127 serves as a coordination point for isopentenyl diphosphate. Glutamate 129 serves as the catalytic Proton donor. Threonine 165 contributes to the (2E)-4-hydroxy-3-methylbut-2-enyl diphosphate binding site. Cysteine 193 lines the [4Fe-4S] cluster pocket. (2E)-4-hydroxy-3-methylbut-2-enyl diphosphate is bound by residues serine 221, serine 222, asparagine 223, and serine 265. Residues serine 221, serine 222, asparagine 223, and serine 265 each contribute to the dimethylallyl diphosphate site. Residues serine 221, serine 222, asparagine 223, and serine 265 each contribute to the isopentenyl diphosphate site.

The protein belongs to the IspH family. It depends on [4Fe-4S] cluster as a cofactor.

The enzyme catalyses isopentenyl diphosphate + 2 oxidized [2Fe-2S]-[ferredoxin] + H2O = (2E)-4-hydroxy-3-methylbut-2-enyl diphosphate + 2 reduced [2Fe-2S]-[ferredoxin] + 2 H(+). It catalyses the reaction dimethylallyl diphosphate + 2 oxidized [2Fe-2S]-[ferredoxin] + H2O = (2E)-4-hydroxy-3-methylbut-2-enyl diphosphate + 2 reduced [2Fe-2S]-[ferredoxin] + 2 H(+). It participates in isoprenoid biosynthesis; dimethylallyl diphosphate biosynthesis; dimethylallyl diphosphate from (2E)-4-hydroxy-3-methylbutenyl diphosphate: step 1/1. It functions in the pathway isoprenoid biosynthesis; isopentenyl diphosphate biosynthesis via DXP pathway; isopentenyl diphosphate from 1-deoxy-D-xylulose 5-phosphate: step 6/6. Functionally, catalyzes the conversion of 1-hydroxy-2-methyl-2-(E)-butenyl 4-diphosphate (HMBPP) into a mixture of isopentenyl diphosphate (IPP) and dimethylallyl diphosphate (DMAPP). Acts in the terminal step of the DOXP/MEP pathway for isoprenoid precursor biosynthesis. The polypeptide is 4-hydroxy-3-methylbut-2-enyl diphosphate reductase (Caldanaerobacter subterraneus subsp. tengcongensis (strain DSM 15242 / JCM 11007 / NBRC 100824 / MB4) (Thermoanaerobacter tengcongensis)).